The following is a 434-amino-acid chain: V-type ATP synthase beta chain (434 aa).

It belongs to the ATPase alpha/beta chains family.

Its function is as follows. Produces ATP from ADP in the presence of a proton gradient across the membrane. The V-type beta chain is a regulatory subunit. The polypeptide is V-type ATP synthase beta chain (atpB) (Borreliella burgdorferi (strain ATCC 35210 / DSM 4680 / CIP 102532 / B31) (Borrelia burgdorferi)).